Here is a 101-residue protein sequence, read N- to C-terminus: MDVRDIILRPVITEKSTNLMDDKKYTFDVLLTATKTQVRNAVEEIFDVKVKNVNIMNVRGKDKRVGRYTGKTARRRKAIVTLTNDSNDIKIFQDENKEDNK.

It belongs to the universal ribosomal protein uL23 family. Part of the 50S ribosomal subunit. Contacts protein L29, and trigger factor when it is bound to the ribosome.

In terms of biological role, one of the early assembly proteins it binds 23S rRNA. One of the proteins that surrounds the polypeptide exit tunnel on the outside of the ribosome. Forms the main docking site for trigger factor binding to the ribosome. In Lactobacillus helveticus (strain DPC 4571), this protein is Large ribosomal subunit protein uL23.